Reading from the N-terminus, the 243-residue chain is UPF0173 metal-dependent hydrolase Caur_2542 (243 aa).

The protein belongs to the UPF0173 family.

In Chloroflexus aurantiacus (strain ATCC 29366 / DSM 635 / J-10-fl), this protein is UPF0173 metal-dependent hydrolase Caur_2542.